A 146-amino-acid chain; its full sequence is Protein PBDC1 homolog (146 aa).

Belongs to the PBDC1 family.

It localises to the cytoplasm. In Saccharomyces cerevisiae (strain ATCC 204508 / S288c) (Baker's yeast), this protein is Protein PBDC1 homolog.